The following is a 466-amino-acid chain: Probable Xaa-Pro aminopeptidase pepP (466 aa).

Mn(2+) contacts are provided by Asp264, Asp275, Glu398, and Glu438.

Belongs to the peptidase M24B family. It depends on Mn(2+) as a cofactor.

It catalyses the reaction Release of any N-terminal amino acid, including proline, that is linked to proline, even from a dipeptide or tripeptide.. Its function is as follows. Catalyzes the removal of a penultimate prolyl residue from the N-termini of peptides. In Aspergillus terreus (strain NIH 2624 / FGSC A1156), this protein is Probable Xaa-Pro aminopeptidase pepP (pepP).